The following is a 1382-amino-acid chain: Hepatocyte growth factor receptor (1382 aa).

Residues 1–24 (MKAPAVLAPGILVLLFTLVPRSHG) form the signal peptide. At 25-933 (ECKEALVKSE…VIVQPDQNFM (909 aa)) the chain is on the extracellular side. The Sema domain maps to 27–516 (KEALVKSEMN…TGNKITKIPL (490 aa)). A glycan (N-linked (GlcNAc...) asparagine) is linked at N45. 4 cysteine pairs are disulfide-bonded: C95–C101, C98–C160, C133–C141, and C173–C176. An N-linked (GlcNAc...) asparagine glycan is attached at N106. N-linked (GlcNAc...) asparagine glycosylation is found at N203 and N359. Intrachain disulfides connect C299/C364 and C386/C398. N-linked (GlcNAc...) asparagine glycans are attached at residues N400 and N406. Intrachain disulfides connect C521–C539, C527–C562, C530–C546, and C542–C552. 3 IPT/TIG domains span residues 564 to 656 (PAIY…FSYV), 658 to 740 (PVIT…FSYR), and 743 to 837 (PIVD…LTYV). A glycan (O-linked (Man) threonine) is linked at T583. Residues N608, N614, and N636 are each glycosylated (N-linked (GlcNAc...) asparagine). T677 and T762 each carry an O-linked (Man) threonine glycan. 2 N-linked (GlcNAc...) asparagine glycosylation sites follow: N786 and N880. Residues 934–956 (GLIVGGVSISIILLLLLGLFLWL) traverse the membrane as a helical segment. The Cytoplasmic portion of the chain corresponds to 957–1382 (KKKKRIKDLG…QDNVDGTVDT (426 aa)). S967 is subject to Phosphoserine. At T978 the chain carries Phosphothreonine. S991, S998, and S1001 each carry phosphoserine. Y1004 is modified (phosphotyrosine). The region spanning 1079–1346 (VHFSEVIGRG…RISTIFSTFI (268 aa)) is the Protein kinase domain. Residues 1085–1093 (IGRGHFGCV) and K1111 each bind ATP. D1205 functions as the Proton acceptor in the catalytic mechanism. Residues 1213–1382 (LDEKFTVKVA…QDNVDGTVDT (170 aa)) form an interaction with RANBP9 region. Y1231 carries the post-translational modification Phosphotyrosine. A phosphotyrosine; by autocatalysis mark is found at Y1235 and Y1236. The residue at position 1290 (T1290) is a Phosphothreonine. Residues 1321 to 1360 (WHPKAEMRPSFSELVSRISTIFSTFIGEHYVHVNATYVNV) are interaction with MUC20. 2 positions are modified to phosphotyrosine; by autocatalysis: Y1350 and Y1357. Position 1366 is a phosphotyrosine (Y1366).

Belongs to the protein kinase superfamily. Tyr protein kinase family. Heterodimer made of an alpha chain (50 kDa) and a beta chain (145 kDa) which are disulfide linked. Binds PLXNB1. Interacts when phosphorylated with downstream effectors including STAT3, PIK3R1, SRC, PCLG1, GRB2 and GAB1. Interacts with SPSB1, SPSB2 and SPSB4. Interacts with INPP5D/SHIP1. When phosphorylated at Tyr-1357, interacts with INPPL1/SHIP2. Interacts with RANBP9 and RANBP10, as well as SPSB1, SPSB2, SPSB3 and SPSB4. SPSB1 binding occurs in the presence and in the absence of HGF, however HGF treatment has a positive effect on this interaction. Interacts with MUC20; prevents interaction with GRB2 and suppresses hepatocyte growth factor-induced cell proliferation. Interacts with GRB10. Interacts with PTPN1 and PTPN2. Interacts with HSP90AA1 and HSP90AB1; the interaction suppresses MET kinase activity. Interacts with tensin TNS3. Interacts (when phosphorylated) with tensin TNS4 (via SH2 domain); the interaction increases MET protein stability by inhibiting MET endocytosis and subsequent lysosomal degradation. Autophosphorylated in response to ligand binding on Tyr-1235 and Tyr-1236 in the kinase domain leading to further phosphorylation of Tyr-1350 and Tyr-1357 in the C-terminal multifunctional docking site. Dephosphorylated by PTPRJ at Tyr-1350 and Tyr-1366. Dephosphorylated by PTPN1 and PTPN2. In terms of processing, ubiquitinated. Ubiquitination by CBL regulates the receptor stability and activity through proteasomal degradation. Post-translationally, O-mannosylation of IPT/TIG domains by TMEM260 is required for protein maturation. O-mannosylated residues are composed of single mannose glycans that are not elongated or modified.

It is found in the membrane. The enzyme catalyses L-tyrosyl-[protein] + ATP = O-phospho-L-tyrosyl-[protein] + ADP + H(+). With respect to regulation, in its inactive state, the C-terminal tail interacts with the catalytic domain and inhibits the kinase activity. Upon ligand binding, the C-terminal tail is displaced and becomes phosphorylated, thus increasing the kinase activity. Functionally, receptor tyrosine kinase that transduces signals from the extracellular matrix into the cytoplasm by binding to hepatocyte growth factor/HGF ligand. Regulates many physiological processes including proliferation, scattering, morphogenesis and survival. Ligand binding at the cell surface induces autophosphorylation of MET on its intracellular domain that provides docking sites for downstream signaling molecules. Following activation by ligand, interacts with the PI3-kinase subunit PIK3R1, PLCG1, SRC, GRB2, STAT3 or the adapter GAB1. Recruitment of these downstream effectors by MET leads to the activation of several signaling cascades including the RAS-ERK, PI3 kinase-AKT, or PLCgamma-PKC. The RAS-ERK activation is associated with the morphogenetic effects while PI3K/AKT coordinates prosurvival effects. During embryonic development, MET signaling plays a role in gastrulation, development and migration of muscles and neuronal precursors, angiogenesis and kidney formation. In adults, participates in wound healing as well as organ regeneration and tissue remodeling. Also promotes differentiation and proliferation of hematopoietic cells. This is Hepatocyte growth factor receptor (MET) from Oryctolagus cuniculus (Rabbit).